We begin with the raw amino-acid sequence, 192 residues long: Phosphoheptose isomerase (192 aa).

An SIS domain is found at 37–192; it reads LADSFKAGGK…IQLIEKEMEK (156 aa). Substrate is bound at residue 52 to 54; that stretch reads NGG. Zn(2+)-binding residues include His61 and Glu65. Substrate-binding positions include Glu65, 93–94, 119–121, Ser124, and Gln172; these read ND and STS. Residues Gln172 and His180 each coordinate Zn(2+).

This sequence belongs to the SIS family. GmhA subfamily. In terms of assembly, homotetramer. The cofactor is Zn(2+).

It localises to the cytoplasm. The catalysed reaction is 2 D-sedoheptulose 7-phosphate = D-glycero-alpha-D-manno-heptose 7-phosphate + D-glycero-beta-D-manno-heptose 7-phosphate. It functions in the pathway carbohydrate biosynthesis; D-glycero-D-manno-heptose 7-phosphate biosynthesis; D-glycero-alpha-D-manno-heptose 7-phosphate and D-glycero-beta-D-manno-heptose 7-phosphate from sedoheptulose 7-phosphate: step 1/1. Catalyzes the isomerization of sedoheptulose 7-phosphate in D-glycero-D-manno-heptose 7-phosphate. In Proteus mirabilis (strain HI4320), this protein is Phosphoheptose isomerase.